The sequence spans 485 residues: UDP-N-acetylmuramate--L-alanine ligase (485 aa).

127–133 (GTHGKTT) is an ATP binding site.

This sequence belongs to the MurCDEF family.

Its subcellular location is the cytoplasm. It carries out the reaction UDP-N-acetyl-alpha-D-muramate + L-alanine + ATP = UDP-N-acetyl-alpha-D-muramoyl-L-alanine + ADP + phosphate + H(+). The protein operates within cell wall biogenesis; peptidoglycan biosynthesis. Functionally, cell wall formation. The chain is UDP-N-acetylmuramate--L-alanine ligase from Shewanella frigidimarina (strain NCIMB 400).